The chain runs to 454 residues: Toluate 1,2-dioxygenase subunit alpha (454 aa).

The region spanning 51–148 is the Rieske domain; that stretch reads IYLAHESQIP…SFDCDGSHDL (98 aa). The [2Fe-2S] cluster site is built by Cys-92, His-94, Cys-112, and His-115. Residues His-221 and His-226 each coordinate Fe cation.

The protein belongs to the bacterial ring-hydroxylating dioxygenase alpha subunit family. As to quaternary structure, this dioxygenase system consists of three proteins: the two subunits of the hydroxylase component (XylX and XylY), and an electron transfer component (XylZ). Requires [2Fe-2S] cluster as cofactor. The cofactor is Fe cation.

The protein operates within xenobiotic degradation; toluene degradation. The sequence is that of Toluate 1,2-dioxygenase subunit alpha (xylX) from Pseudomonas putida (Arthrobacter siderocapsulatus).